Here is a 31-residue protein sequence, read N- to C-terminus: Photosystem II reaction center protein T (31 aa).

Residues 3–23 (ALVYTFLLVGTLGIIFFSIFF) traverse the membrane as a helical segment.

It belongs to the PsbT family. PSII is composed of 1 copy each of membrane proteins PsbA, PsbB, PsbC, PsbD, PsbE, PsbF, PsbH, PsbI, PsbJ, PsbK, PsbL, PsbM, PsbT, PsbY, PsbZ, Psb30/Ycf12, at least 3 peripheral proteins of the oxygen-evolving complex and a large number of cofactors. It forms dimeric complexes.

It localises to the plastid. Its subcellular location is the chloroplast thylakoid membrane. Found at the monomer-monomer interface of the photosystem II (PS II) dimer, plays a role in assembly and dimerization of PSII. PSII is a light-driven water plastoquinone oxidoreductase, using light energy to abstract electrons from H(2)O, generating a proton gradient subsequently used for ATP formation. In Tupiella akineta (Green alga), this protein is Photosystem II reaction center protein T.